The primary structure comprises 276 residues: NAC domain-containing protein 67 (276 aa).

An NAC domain is found at 17–170; sequence LPPGFRFHPT…DWVLCRLYNK (154 aa).

In terms of tissue distribution, expressed in leaf blades.

The protein resides in the nucleus. In terms of biological role, probable transcription factor involved in stress response. This Oryza sativa subsp. japonica (Rice) protein is NAC domain-containing protein 67.